The chain runs to 289 residues: Aquaporin PIP2-3 (289 aa).

Residues 1–25 (MAKQDIEASGPEAGEFSAKDYTDPP) form a disordered region. A run of 2 helical transmembrane segments spans residues 43-63 (AVIA…ATVI) and 80-100 (CGGV…FILV). The NPA 1 motif lies at 112–114 (NPA). A run of 3 helical transmembrane segments spans residues 131–151 (LLYI…VKGF), 173–193 (GTGL…VFSA), and 207–227 (VLAP…TIPI). Positions 233–235 (NPA) match the NPA 2 motif. Residues 255-275 (IFWVGPLIGAAIAAAYHQYVL) form a helical membrane-spanning segment.

The protein belongs to the MIP/aquaporin (TC 1.A.8) family. PIP (TC 1.A.8.11) subfamily.

The protein resides in the cell membrane. Functionally, aquaporins facilitate the transport of water and small neutral solutes across cell membranes. The polypeptide is Aquaporin PIP2-3 (PIP2-3) (Zea mays (Maize)).